The following is a 298-amino-acid chain: Protease HtpX homolog (298 aa).

2 consecutive transmembrane segments (helical) span residues Ile5 to Val25 and Met45 to Ile65. His155 contributes to the Zn(2+) binding site. Residue Glu156 is part of the active site. His159 lines the Zn(2+) pocket. Transmembrane regions (helical) follow at residues Leu170 to Ala190 and Phe204 to Ala224. Position 230 (Glu230) interacts with Zn(2+).

The protein belongs to the peptidase M48B family. Zn(2+) serves as cofactor.

The protein localises to the cell membrane. The chain is Protease HtpX homolog from Bacillus subtilis (strain 168).